A 328-amino-acid chain; its full sequence is MFIIKSMLYRLMQMIVVLFVISTLTFILMKLSPGNPVDKILHLDVAQVSMEQINATKDKLGLNDSLLVQWWHWMNHLLHFNLGKSFESKEPVTQILFNYAPITLLISFSTLVLSLCISIPLGIIAAKRFHKLSDKVIRVISTLSISLPAFFIGIILLFIVTNLMNIDSVILSQFILPVITLSLGMCAYIIRLVRSNLLMLLQSNIVQASRLRGMNERYILIHDLLKPTILPIIPLLGISLGSLIGGTVVIENLFDIPGIGYLLMDSIKSRDYPVIQGCVLFIGFFVVIINTIADLLTLLLDPKQRLQLGNPKSKANTPLISESSDRHA.

The next 6 helical transmembrane spans lie at 11-31, 104-124, 139-159, 170-190, 229-249, and 279-299; these read LMQM…LMKL, LLIS…LGII, VIST…LLFI, ILSQ…AYII, ILPI…GTVV, and VLFI…LTLL. Positions 100–297 constitute an ABC transmembrane type-1 domain; sequence APITLLISFS…IINTIADLLT (198 aa).

The protein belongs to the binding-protein-dependent transport system permease family. OppBC subfamily. As to quaternary structure, the complex is composed of two ATP-binding proteins (NikD and NikE), two transmembrane proteins (NikB and NikC) and a solute-binding protein (NikA).

It localises to the cell membrane. Part of the ABC transporter complex NikABCDE (Opp2) involved in nickel import. Probably responsible for the translocation of the substrate across the membrane. This is Nickel import system permease protein NikB from Staphylococcus aureus (strain bovine RF122 / ET3-1).